Reading from the N-terminus, the 263-residue chain is tRNA uridine(34) hydroxylase (263 aa).

The Rhodanese domain maps to 129–223 (EGREVVTLDT…YFEETDGAFY (95 aa)). The Cysteine persulfide intermediate role is filled by cysteine 183.

Belongs to the TrhO family.

The catalysed reaction is uridine(34) in tRNA + AH2 + O2 = 5-hydroxyuridine(34) in tRNA + A + H2O. Functionally, catalyzes oxygen-dependent 5-hydroxyuridine (ho5U) modification at position 34 in tRNAs. The sequence is that of tRNA uridine(34) hydroxylase from Delftia acidovorans (strain DSM 14801 / SPH-1).